We begin with the raw amino-acid sequence, 319 residues long: MQFSLIPFISSFALTVIFLPLFIGFMRMKHEGQVIRDEGPKWHEKKSGTPTMGGVVFMLASVISTLWVLIWQKNLNKTTWILIIAFLGYGIIGFLDDGIKLYFKRNLGLKAWQKLLGQIIIAALIIALAFSDHFAFELYIPFAGMVRNSFLFSLFVLFWLVGFSNAVNLSDGLDGLATGLSIIAYATYAWIAYQEKNWVIVAFTLSVIGGLVGFFIFNHKPAKIFMGDAGSLALGGGLATVSIFLHRPWSLLLIGIVFVLETLSVILQVISFQTTGKRIFKMTPIHHHFEMLGWSEWKVDIVFWIVGLIGSIIYLIIWG.

Helical transmembrane passes span 5 to 25 (LIPF…FIGF), 51 to 71 (TMGG…VLIW), 79 to 99 (TWIL…DDGI), 116 to 136 (LGQI…HFAF), 149 to 169 (SFLF…AVNL), 172 to 192 (GLDG…AWIA), 197 to 217 (NWVI…FFIF), 224 to 244 (IFMG…VSIF), 252 to 272 (LLIG…VISF), and 299 to 319 (VDIV…IIWG).

It belongs to the glycosyltransferase 4 family. MraY subfamily. The cofactor is Mg(2+).

It is found in the cell membrane. It catalyses the reaction UDP-N-acetyl-alpha-D-muramoyl-L-alanyl-gamma-D-glutamyl-L-lysyl-D-alanyl-D-alanine + di-trans,octa-cis-undecaprenyl phosphate = Mur2Ac(oyl-L-Ala-gamma-D-Glu-L-Lys-D-Ala-D-Ala)-di-trans,octa-cis-undecaprenyl diphosphate + UMP. The protein operates within cell wall biogenesis; peptidoglycan biosynthesis. In terms of biological role, catalyzes the initial step of the lipid cycle reactions in the biosynthesis of the cell wall peptidoglycan: transfers peptidoglycan precursor phospho-MurNAc-pentapeptide from UDP-MurNAc-pentapeptide onto the lipid carrier undecaprenyl phosphate, yielding undecaprenyl-pyrophosphoryl-MurNAc-pentapeptide, known as lipid I. This Lactobacillus gasseri (strain ATCC 33323 / DSM 20243 / BCRC 14619 / CIP 102991 / JCM 1131 / KCTC 3163 / NCIMB 11718 / NCTC 13722 / AM63) protein is Phospho-N-acetylmuramoyl-pentapeptide-transferase.